The sequence spans 211 residues: MYQPDFPPVPFRLGLYPVVDSVQWIERLLDAGVRTLQLRIKDRRDEEVEADVVAAIALGRRYNARLFINDYWRLAIKHQAYGVHLGQEDLQATDLSAIRAAGLRLGVSTHDDMEIDVALAARPSYIALGHVFPTQTKQMPSAAQGLEQLARHVERLADYPTVAIGGISLPRAPAVIATGVGSIAVVSAITQAADWRLATAQLLEIAGVGDE.

4-amino-2-methyl-5-(diphosphooxymethyl)pyrimidine is bound by residues 37–41 (QLRIK) and Asn69. Asp70 and Asp89 together coordinate Mg(2+). 4-amino-2-methyl-5-(diphosphooxymethyl)pyrimidine is bound at residue Ser108. 134 to 136 (TQT) is a 2-[(2R,5Z)-2-carboxy-4-methylthiazol-5(2H)-ylidene]ethyl phosphate binding site. A 4-amino-2-methyl-5-(diphosphooxymethyl)pyrimidine-binding site is contributed by Lys137. Residues Gly166 and 186-187 (VS) contribute to the 2-[(2R,5Z)-2-carboxy-4-methylthiazol-5(2H)-ylidene]ethyl phosphate site.

This sequence belongs to the thiamine-phosphate synthase family. Mg(2+) is required as a cofactor.

The enzyme catalyses 2-[(2R,5Z)-2-carboxy-4-methylthiazol-5(2H)-ylidene]ethyl phosphate + 4-amino-2-methyl-5-(diphosphooxymethyl)pyrimidine + 2 H(+) = thiamine phosphate + CO2 + diphosphate. It catalyses the reaction 2-(2-carboxy-4-methylthiazol-5-yl)ethyl phosphate + 4-amino-2-methyl-5-(diphosphooxymethyl)pyrimidine + 2 H(+) = thiamine phosphate + CO2 + diphosphate. It carries out the reaction 4-methyl-5-(2-phosphooxyethyl)-thiazole + 4-amino-2-methyl-5-(diphosphooxymethyl)pyrimidine + H(+) = thiamine phosphate + diphosphate. It functions in the pathway cofactor biosynthesis; thiamine diphosphate biosynthesis; thiamine phosphate from 4-amino-2-methyl-5-diphosphomethylpyrimidine and 4-methyl-5-(2-phosphoethyl)-thiazole: step 1/1. Condenses 4-methyl-5-(beta-hydroxyethyl)thiazole monophosphate (THZ-P) and 2-methyl-4-amino-5-hydroxymethyl pyrimidine pyrophosphate (HMP-PP) to form thiamine monophosphate (TMP). This chain is Thiamine-phosphate synthase, found in Shigella dysenteriae serotype 1 (strain Sd197).